We begin with the raw amino-acid sequence, 316 residues long: Olfactory receptor 5P79 (316 aa).

The Extracellular segment spans residues 1–28; it reads MGILKDGNHTAVTEFILLGLTDDPVLKV. N-linked (GlcNAc...) asparagine glycosylation occurs at Asn8. The helical transmembrane segment at 29-49 threads the bilayer; that stretch reads VLFTIILCIYLVTVSGNLSTI. Over 50 to 57 the chain is Cytoplasmic; sequence LLIRVSSQ. The helical transmembrane segment at 58 to 78 threads the bilayer; sequence LHHPMYFFLSHLASVDIGISS. The Extracellular segment spans residues 79–102; sequence SVTPNMLVNFLLERSTISYLGCGI. Cys100 and Cys192 are joined by a disulfide. The helical transmembrane segment at 103–123 threads the bilayer; it reads QLGSGAFFGSTESFLLAAMAY. Residues 124 to 136 are Cytoplasmic-facing; it reads DHFMAICNPLLYS. The chain crosses the membrane as a helical span at residues 137-157; it reads TKMSTQVCIQLLVGSYIGGFL. Topologically, residues 158 to 199 are extracellular; it reads NASSFILSFFSFLFCGPNKVNHFFCDFTPLVELSCSDNSVLL. A helical transmembrane segment spans residues 200 to 220; sequence ILDSFSAGSIIVITVLVIAIS. Over 221–240 the chain is Cytoplasmic; the sequence is YTYILITILKMHSTEGRHKA. A helical membrane pass occupies residues 241-261; the sequence is FSTCTSHLTAVTVFYGTVTFI. The Extracellular segment spans residues 262 to 274; that stretch reads YVMPKSSYSTDQN. Residues 275 to 297 traverse the membrane as a helical segment; that stretch reads KVLSVFYMIAIAIPMLNPLIYSL. Topologically, residues 298-316 are cytoplasmic; that stretch reads RNNEIKNALKRQLSKKTFS.

This sequence belongs to the G-protein coupled receptor 1 family.

The protein resides in the cell membrane. Functionally, potential odorant receptor. In Mus musculus (Mouse), this protein is Olfactory receptor 5P79.